Reading from the N-terminus, the 695-residue chain is Potassium voltage-gated channel subfamily KQT member 4 (695 aa).

Positions 1-21 (MAEAPPRRLGLGPPPGDAPRA) are disordered. Residues 1–96 (MAEAPPRRLG…VYNVLERPRG (96 aa)) are Cytoplasmic-facing. Arg-93 contacts a 1,2-diacyl-sn-glycero-3-phospho-(1D-myo-inositol-4,5-bisphosphate). The chain crosses the membrane as a helical span at residues 97–118 (WAFVYHVFIFLLVFSCLVLSVL). Topologically, residues 119 to 129 (STIQEHQELAN) are extracellular. Residues 130 to 152 (ECLLILEFVMIVVFGLEYIVRVW) form a helical membrane-spanning segment. At 153 to 168 (SAGCCCRYRGWQGRFR) the chain is on the cytoplasmic side. A helical membrane pass occupies residues 169–191 (FARKPFCVIDFIVFVASVAVIAA). Lys-172 provides a ligand contact to a 1,2-diacyl-sn-glycero-3-phospho-(1D-myo-inositol-4,5-bisphosphate). Residues 192–202 (GTQGNIFATSA) lie on the Extracellular side of the membrane. A helical; Voltage-sensor transmembrane segment spans residues 203-223 (LRSMRFLQILRMVRMDRRGGT). Positions 219, 220, 225, and 235 each coordinate a 1,2-diacyl-sn-glycero-3-phospho-(1D-myo-inositol-4,5-bisphosphate). Residues 224 to 235 (WKLLGSVVYAHS) are Cytoplasmic-facing. Residues 236–258 (KELITAWYIGFLVLIFASFLVYL) form a helical membrane-spanning segment. Residues 259–270 (AEKDANSDFSSY) are Extracellular-facing. Positions 271 to 292 (ADSLWWGTITLTTIGYGDKTPH) form an intramembrane region, pore-forming. Position 293 (Thr-293) is a topological domain, extracellular. Residues 294–322 (WLGRVLAAGFALLGISFFALPAGILGSGF) traverse the membrane as a helical segment. Topologically, residues 323–695 (ALKVQEQHRQ…ISRSVSTNMD (373 aa)) are cytoplasmic. Residues His-330 and Lys-333 each contribute to the a 1,2-diacyl-sn-glycero-3-phospho-(1D-myo-inositol-4,5-bisphosphate) site. Positions 342 to 351 (AANLIQAAWR) are interaction with CALM. 2 disordered regions span residues 400–480 (RRAP…TKVQ) and 496–515 (RLKP…AEEK). Composition is skewed to polar residues over residues 443-452 (GSSQRRTGPS) and 463-480 (TSPS…TKVQ). Residues 535 to 549 (RSIRILKFLVAKRKF) are interaction with CALM. Residues 546-650 (KRKFKETLRP…SRCLRSGTSA (105 aa)) are C-terminal assembly domain (tetramerization). The disordered stretch occupies residues 587 to 606 (VGRGPGDRKAREKGDKGPSD). Basic and acidic residues predominate over residues 591-605 (PGDRKAREKGDKGPS). A coiled-coil region spans residues 615–636 (MMGRVVKVEKQVQSIEHKLDLL).

This sequence belongs to the potassium channel family. KQT (TC 1.A.1.15) subfamily. Kv7.4/KCNQ4 sub-subfamily. Homotetramer. Interacts (via C-terminus) with calmodulin; forms a heterooctameric structure (with 4:4 KCNQ1:CALM stoichiometry); the interaction is calcium-independent, constitutive, participates in the proper assembly of a functional channel. The interaction with calcium-free CALM controls channel trafficking whereas interaction with calcium-bound CALM regulates channel gating. May form a functional heteromultimeric channel with KCNQ3. Interacts with HSP90AB1; promotes cell surface expression of KCNQ4. As to expression, expressed in the outer, but not the inner, sensory hair cells of the cochlea. Slightly expressed in heart, brain and skeletal muscle.

Its subcellular location is the basal cell membrane. The catalysed reaction is K(+)(in) = K(+)(out). Two molecules of phosphatidylinositol-4,5-bisphosphate (PIP2-I and PIP2-II) are essential to activate KCNQ4 channel by inducing the coupling of the voltage-sensing domain (VSD) and the pore-forming domain (PD). Upon channel activation, PIP2-I and PIP2-II disrupt the VSD-calmodulin/CALM interaction, causing the release of CALM from the VSD which triggers the opening of the gate. Calcium suppresses KCNQ4 channel current through calcium-bound CALM C-terminus. Therefore CALM acts as calcium sensor that controls channel activity. ML213 potentiates KCNQ4 channel. KCNQ4 channel is blocked by linopirdin, XE991 and bepridil, whereas clofilium is without significant effect. Muscarinic agonist oxotremorine-M strongly suppress KCNQ4 current in CHO cells in which cloned KCNQ4 channels were coexpressed with M1 muscarinic receptors. Pore-forming subunit of the voltage-gated potassium (Kv) channel involved in the regulation of sensory cells excitability in the cochlea. KCNQ4/Kv7.4 channel is composed of 4 pore-forming subunits assembled as tetramers. Promotes the outflow of potassium ions in the repolarization phase of action potential which plays a role in regulating membrane potential of excitable cells. The channel conducts a slowly activating and deactivating current. Current often shows some inward rectification at positive potentials. Channel may be selectively permeable in vitro to other cations besides potassium, in decreasing order of affinity K(+) = Rb(+) &gt; Cs(+) &gt; Na(+). Important for normal physiological function of inner ear such as sensory perception of sound. The chain is Potassium voltage-gated channel subfamily KQT member 4 from Homo sapiens (Human).